Reading from the N-terminus, the 275-residue chain is Gamma carbonic anhydrase 1, mitochondrial (275 aa).

The transit peptide at 1–43 (MGTLGRAFYSVGFWIRETGQALDRLGCRLQGKNYFREQLSRHR) directs the protein to the mitochondrion. Residues 86–88 (RGD) and 101–102 (QD) each bind substrate. Zn(2+)-binding residues include His107, His130, and His135. Asn209 is a binding site for substrate. Positions 256–275 (LNLPNNILPDKETKRPSNVN) are disordered. Over residues 264 to 275 (PDKETKRPSNVN) the composition is skewed to basic and acidic residues.

The protein belongs to the gamma-class carbonic anhydrase family. In terms of assembly, homotrimer. Component of the mitochondrial oxidoreductase respiratory chain complex I; element of the extra matrix-exposed domain, which is attached to the membrane arm of this complex. The cofactor is Zn(2+).

It localises to the mitochondrion membrane. Functionally, enzyme involved in the catabolism of H(2)CO(3) but that does not mediates the reversible hydration of carbon dioxide. Mediates complex I assembly in mitochondria and respiration. This is Gamma carbonic anhydrase 1, mitochondrial (GAMMACA1) from Arabidopsis thaliana (Mouse-ear cress).